Consider the following 424-residue polypeptide: Tubulin-specific chaperone cofactor E-like protein (424 aa).

2 positions are modified to phosphoserine: S18 and S41. LRR repeat units lie at residues 73-98, 99-123, 124-147, 150-172, 173-197, 199-224, and 226-250; these read CAHV…IVSN, VPQL…TCAG, SFSG…HTIL, LPDL…PSVC, CHSL…KLGV, FPSL…SLAR, and FPNL…KLNS. An LRRCT domain is found at 262–303; it reads IPLLQPYTTEERRKLVVARLPSVSKLNGSVVTDGEREDSERF. One can recognise a Ubiquitin-like domain in the interval 334–424; it reads AEVDLRPQSS…DKIFVESKTK (91 aa). A coiled-coil region spans residues 350–375; that stretch reads FNDQVEEVSIRLDQTVAELKRQLKTL.

It localises to the cytoplasm. It is found in the cytoskeleton. Its function is as follows. Acts as a regulator of tubulin stability. The sequence is that of Tubulin-specific chaperone cofactor E-like protein (Tbcel) from Rattus norvegicus (Rat).